The primary structure comprises 200 residues: Pyridoxal 5'-phosphate synthase subunit PdxT (200 aa).

52–54 contacts L-glutamine; the sequence is GES. Cys-84 functions as the Nucleophile in the catalytic mechanism. L-glutamine contacts are provided by residues Arg-116 and 145–146; that span reads IR. Catalysis depends on charge relay system residues His-181 and Glu-183.

Belongs to the glutaminase PdxT/SNO family. As to quaternary structure, in the presence of PdxS, forms a dodecamer of heterodimers. Only shows activity in the heterodimer.

It catalyses the reaction aldehydo-D-ribose 5-phosphate + D-glyceraldehyde 3-phosphate + L-glutamine = pyridoxal 5'-phosphate + L-glutamate + phosphate + 3 H2O + H(+). The enzyme catalyses L-glutamine + H2O = L-glutamate + NH4(+). The protein operates within cofactor biosynthesis; pyridoxal 5'-phosphate biosynthesis. In terms of biological role, catalyzes the hydrolysis of glutamine to glutamate and ammonia as part of the biosynthesis of pyridoxal 5'-phosphate. The resulting ammonia molecule is channeled to the active site of PdxS. This is Pyridoxal 5'-phosphate synthase subunit PdxT from Sulfurisphaera tokodaii (strain DSM 16993 / JCM 10545 / NBRC 100140 / 7) (Sulfolobus tokodaii).